Reading from the N-terminus, the 1033-residue chain is Ubiquitin carboxyl-terminal hydrolase 48 (1033 aa).

Positions 89–419 constitute a USP domain; it reads VGLTNLGATC…NAYMLVYRLQ (331 aa). Residue Cys-98 is the Nucleophile of the active site. The Proton acceptor role is filled by His-351. 3 consecutive DUSP domains span residues 457–552, 567–690, and 710–823; these read QSVA…KALC, NQLN…NKEC, and MMAS…RTRA. Residues 610–639 form a disordered region; the sequence is EQDEDAEHSNGKLNGNAPNKDEVNEEKREE. Residues 878–920 form a disordered region; that stretch reads APELNVSSSEAEEEREENKPEGEQDPDFNQSNGGAKRQKLSHQ. The Ubiquitin-like domain occupies 931-1007; that stretch reads RRSTRHRKVR…ILLKADEPIA (77 aa).

The protein belongs to the peptidase C19 family.

Its subcellular location is the cytoplasm. It localises to the nucleus. It catalyses the reaction Thiol-dependent hydrolysis of ester, thioester, amide, peptide and isopeptide bonds formed by the C-terminal Gly of ubiquitin (a 76-residue protein attached to proteins as an intracellular targeting signal).. Recognizes and hydrolyzes the peptide bond at the C-terminal Gly of ubiquitin. Involved in the processing of poly-ubiquitin precursors as well as that of ubiquitinated proteins. The sequence is that of Ubiquitin carboxyl-terminal hydrolase 48 (USP48) from Gallus gallus (Chicken).